The chain runs to 637 residues: Interleukin-17 receptor E (637 aa).

The first 24 residues, 1 to 24 (MGSPRLAALLLSQPLLFICLAVSA), serve as a signal peptide directing secretion. The Extracellular portion of the chain corresponds to 25-415 (QVACPCLPRW…LCPDVSHRHL (391 aa)). Residues Asn278 and Asn307 are each glycosylated (N-linked (GlcNAc...) asparagine). Residues 416 to 436 (GLLILALLGLTTLLGVVLVLF) form a helical membrane-spanning segment. Topologically, residues 437 to 637 (CRRLLPGPGR…TNSPCGFSCL (201 aa)) are cytoplasmic. The SEFIR domain occupies 447–583 (TRPVLLLHAA…LLRDLPRLLR (137 aa)).

As to quaternary structure, forms heterodimers with IL17RE; the heterodimer binds IL17C.

The protein resides in the cell membrane. Functionally, specific functional receptor for IL17C, signaling through the NF-kappa-B and MAPK pathways. Requires TRAF3IP2 /ACT1 for signaling. Crucial regulator in innate immunity to bacterial pathogens. This chain is Interleukin-17 receptor E (Il17re), found in Rattus norvegicus (Rat).